The primary structure comprises 978 residues: Translation initiation factor IF-2 (978 aa).

Disordered regions lie at residues alanine 107–leucine 129 and glutamine 146–glutamine 387. Positions glutamine 146–glutamate 169 are enriched in basic and acidic residues. The segment covering lysine 170–alanine 186 has biased composition (low complexity). Positions alanine 215–serine 259 are enriched in basic and acidic residues. 2 stretches are compositionally biased toward low complexity: residues lysine 295–glycine 326 and proline 349–arginine 361. A compositionally biased stretch (basic and acidic residues) spans glycine 375–valine 386. The tr-type G domain maps to proline 478 to lysine 647. Positions glycine 487–threonine 494 are G1. GTP is bound at residue glycine 487–threonine 494. A G2 region spans residues glycine 512–histidine 516. Residues aspartate 533–glycine 536 are G3. Residues aspartate 533 to histidine 537 and asparagine 587 to aspartate 590 contribute to the GTP site. The segment at asparagine 587 to aspartate 590 is G4. A G5 region spans residues serine 623–lysine 625.

The protein belongs to the TRAFAC class translation factor GTPase superfamily. Classic translation factor GTPase family. IF-2 subfamily.

It is found in the cytoplasm. Its function is as follows. One of the essential components for the initiation of protein synthesis. Protects formylmethionyl-tRNA from spontaneous hydrolysis and promotes its binding to the 30S ribosomal subunits. Also involved in the hydrolysis of GTP during the formation of the 70S ribosomal complex. In Albidiferax ferrireducens (strain ATCC BAA-621 / DSM 15236 / T118) (Rhodoferax ferrireducens), this protein is Translation initiation factor IF-2.